A 249-amino-acid polypeptide reads, in one-letter code: Early E1A protein (249 aa).

Positions 38-46 (MSLHDLFDV) are interaction with RB1 in competition with E2F1. The interaction with UBE2I stretch occupies residues 74-131 (SAAESGSGDSGVGEELLPVDLDLKCYEDGLPPSDPETDEATEAEEEAAMPTYVNENEN). Positions 96-100 (LKCYE) match the LXCXE motif, interaction with host RB1 and TMEM173/STING motif. A zinc finger spans residues 145–165 (CRACDFHRGTSGNPEAMCALC). Residues 180-203 (DAEGESESGSPEDTDFPHPLTATP) form a disordered region. Residues 181–193 (AEGESESGSPEDT) show a composition bias toward acidic residues. A PXDLS motif, CTBP-binding motif is present at residues 238–242 (PLNLS). The Nuclear localization signal motif lies at 244–248 (KRPKC).

It belongs to the adenoviridae E1A protein family. As to quaternary structure, interacts with host UBE2I; this interaction interferes with polySUMOylation. Interacts with host RB1; this interaction induces the aberrant dissociation of RB1-E2F1 complex thereby disrupting the activity of RB1 and activating E2F1-regulated genes. Interacts with host ATF7; the interaction enhances ATF7-mediated viral transactivation activity which requires the zinc binding domains of both proteins. Isoform early E1A 32 kDa protein and isoform early E1A 26 kDa protein interact (via N-terminus) with CUL1 and E3 ubiquitin ligase RBX1; these interactions inhibit RBX1-CUL1-dependent elongation reaction of ubiquitin chains and attenuate ubiquitination of SCF(FBXW7) target proteins. Interacts (via PXLXP motif) with host ZMYND11/BS69 (via MYND-type zinc finger); this interaction inhibits E1A mediated transactivation. Interacts with host EP300; this interaction stimulates the acetylation of RB1 by recruiting EP300 and RB1 into a multimeric-protein complex. Interacts with host CTBP1 and CTBP2; this interaction seems to potentiate viral replication. Interacts with host DCAF7. Interacts with host DYRK1A. Interacts with host KPNA4; this interaction allows E1A import into the host nucleus. Interacts with host EP400; this interaction stabilizes MYC. Interacts with host TBP protein; this interaction probably disrupts the TBP-TATA complex. Interacts (via LXCXE motif) with host TMEM173/STING; this interaction impairs the ability of TMEM173/STING to sense cytosolic DNA and promote the production of type I interferon (IFN-alpha and IFN-beta). Interacts (via C-terminus) with host ZBED1/hDREF (via C-terminus); the interaction is direct.

Its subcellular location is the host nucleus. In terms of biological role, plays a role in viral genome replication by driving entry of quiescent cells into the cell cycle. Stimulation of progression from G1 to S phase allows the virus to efficiently use the cellular DNA replicating machinery to achieve viral genome replication. E1A protein has both transforming and trans-activating activities. Induces the disassembly of the E2F1 transcription factor from RB1 by direct competition for the same binding site on RB1, with subsequent transcriptional activation of E2F1-regulated S-phase genes and of the E2 region of the adenoviral genome. Release of E2F1 leads to the ARF-mediated inhibition of MDM2 and causes TP53/p53 to accumulate because it is not targeted for degradation by MDM2-mediated ubiquitination anymore. This increase in TP53, in turn, would arrest the cell proliferation and direct its death but this effect is counteracted by the viral protein E1B-55K. Inactivation of the ability of RB1 to arrest the cell cycle is critical for cellular transformation, uncontrolled cellular growth and proliferation induced by viral infection. Interaction with RBX1 and CUL1 inhibits ubiquitination of the proteins targeted by SCF(FBXW7) ubiquitin ligase complex, and may be linked to unregulated host cell proliferation. The tumorigenesis-restraining activity of E1A may be related to the disruption of the host CtBP-CtIP complex through the CtBP binding motif. Interaction with host TMEM173/STING impairs the ability of TMEM173/STING to sense cytosolic DNA and promote the production of type I interferon (IFN-alpha and IFN-beta). Promotes the sumoylation of host ZBED1/hDREF with SUMO1. This chain is Early E1A protein, found in Homo sapiens (Human).